The chain runs to 690 residues: uncharacterized protein (690 aa).

This sequence to M.genitalium MG366 and M.pneumoniae MPN544.

This is an uncharacterized protein from Ureaplasma parvum serovar 3 (strain ATCC 700970).